Reading from the N-terminus, the 545-residue chain is Glucose-6-phosphate isomerase 1 (545 aa).

Glu356 (proton donor) is an active-site residue. Active-site residues include His387 and Lys508.

Belongs to the GPI family.

The protein localises to the cytoplasm. The enzyme catalyses alpha-D-glucose 6-phosphate = beta-D-fructose 6-phosphate. Its pathway is carbohydrate biosynthesis; gluconeogenesis. It participates in carbohydrate degradation; glycolysis; D-glyceraldehyde 3-phosphate and glycerone phosphate from D-glucose: step 2/4. Its function is as follows. Catalyzes the reversible isomerization of glucose-6-phosphate to fructose-6-phosphate. The chain is Glucose-6-phosphate isomerase 1 from Cupriavidus pinatubonensis (strain JMP 134 / LMG 1197) (Cupriavidus necator (strain JMP 134)).